A 423-amino-acid polypeptide reads, in one-letter code: Gamma-glutamyl phosphate reductase (423 aa).

A compositionally biased stretch (low complexity) spans 1–14 (MTLQAAPRSAAAQQ). A disordered region spans residues 1-25 (MTLQAAPRSAAAQQREPDLRQEVHD). The segment covering 15 to 25 (REPDLRQEVHD) has biased composition (basic and acidic residues).

This sequence belongs to the gamma-glutamyl phosphate reductase family.

It is found in the cytoplasm. It carries out the reaction L-glutamate 5-semialdehyde + phosphate + NADP(+) = L-glutamyl 5-phosphate + NADPH + H(+). Its pathway is amino-acid biosynthesis; L-proline biosynthesis; L-glutamate 5-semialdehyde from L-glutamate: step 2/2. Its function is as follows. Catalyzes the NADPH-dependent reduction of L-glutamate 5-phosphate into L-glutamate 5-semialdehyde and phosphate. The product spontaneously undergoes cyclization to form 1-pyrroline-5-carboxylate. The chain is Gamma-glutamyl phosphate reductase from Mycobacterium ulcerans (strain Agy99).